A 254-amino-acid polypeptide reads, in one-letter code: 4-hydroxy-tetrahydrodipicolinate reductase (254 aa).

An NAD(+)-binding site is contributed by 7–12; it reads GASGRI. Arg-35 contributes to the NADP(+) binding site. NAD(+) contacts are provided by residues 91 to 93 and 115 to 118; these read GTT and AHNM. Residue His-147 is the Proton donor/acceptor of the active site. His-148 is a binding site for (S)-2,3,4,5-tetrahydrodipicolinate. Lys-151 (proton donor) is an active-site residue. Residue 157–158 participates in (S)-2,3,4,5-tetrahydrodipicolinate binding; sequence GT.

This sequence belongs to the DapB family.

It is found in the cytoplasm. It catalyses the reaction (S)-2,3,4,5-tetrahydrodipicolinate + NAD(+) + H2O = (2S,4S)-4-hydroxy-2,3,4,5-tetrahydrodipicolinate + NADH + H(+). The enzyme catalyses (S)-2,3,4,5-tetrahydrodipicolinate + NADP(+) + H2O = (2S,4S)-4-hydroxy-2,3,4,5-tetrahydrodipicolinate + NADPH + H(+). Its pathway is amino-acid biosynthesis; L-lysine biosynthesis via DAP pathway; (S)-tetrahydrodipicolinate from L-aspartate: step 4/4. Its function is as follows. Catalyzes the conversion of 4-hydroxy-tetrahydrodipicolinate (HTPA) to tetrahydrodipicolinate. The sequence is that of 4-hydroxy-tetrahydrodipicolinate reductase from Helicobacter pylori (strain HPAG1).